The sequence spans 305 residues: Homoserine O-acetyltransferase (305 aa).

The active-site Acyl-thioester intermediate is the Cys142. Substrate-binding residues include Lys163 and Ser192. His233 (proton acceptor) is an active-site residue. Glu235 is an active-site residue. Arg247 contributes to the substrate binding site.

This sequence belongs to the MetA family.

The protein localises to the cytoplasm. The catalysed reaction is L-homoserine + acetyl-CoA = O-acetyl-L-homoserine + CoA. It participates in amino-acid biosynthesis; L-methionine biosynthesis via de novo pathway; O-acetyl-L-homoserine from L-homoserine: step 1/1. Its function is as follows. Transfers an acetyl group from acetyl-CoA to L-homoserine, forming acetyl-L-homoserine. The polypeptide is Homoserine O-acetyltransferase (Methanomassiliicoccus intestinalis (strain Issoire-Mx1)).